The primary structure comprises 323 residues: Olfactory receptor 52B2 (323 aa).

Residues 1 to 27 (MSHTNVTIFHPAVFVLPGIPGLEAYHI) lie on the Extracellular side of the membrane. N-linked (GlcNAc...) asparagine glycosylation is present at N5. The chain crosses the membrane as a helical span at residues 28-48 (WLSIPLCLIYITAVLGNSILI). The Cytoplasmic portion of the chain corresponds to 49-56 (VVIVMERN). A helical membrane pass occupies residues 57–77 (LHVPMYFFLSMLAVMDILLST). At 78 to 101 (TTVPKALAIFWLQAHNIAFDACVT) the chain is on the extracellular side. The cysteines at positions 99 and 191 are disulfide-linked. The helical transmembrane segment at 102–122 (QGFFVHMMFVGESAILLAMAF) threads the bilayer. Over 123 to 141 (DRFVAICAPLRYTTVLTWP) the chain is Cytoplasmic. Residues 142–162 (VVGRIALAVITRSFCIIFPVI) form a helical membrane-spanning segment. The Extracellular segment spans residues 163-198 (FLLKRLPFCLTNIVPHSYCEHIGVARLACADITVNI). Residues 199 to 219 (WYGFSVPIVMVILDVILIAVS) form a helical membrane-spanning segment. Over 220 to 239 (YSLILRAVFRLPSQDARHKA) the chain is Cytoplasmic. A helical transmembrane segment spans residues 240-260 (LSTCGSHLCVILMFYVPSFFT). Residues 261 to 275 (LLTHHFGRNIPQHVH) lie on the Extracellular side of the membrane. A helical membrane pass occupies residues 276–296 (ILLANLYVAVPPMLNPIVYGV). Residues 297-323 (KTKQIREGVAHRFFDIKTWCCTSPLGS) lie on the Cytoplasmic side of the membrane.

Belongs to the G-protein coupled receptor 1 family.

The protein localises to the cell membrane. Functionally, odorant receptor. The chain is Olfactory receptor 52B2 (OR52B2) from Homo sapiens (Human).